The chain runs to 372 residues: Flagellar P-ring protein (372 aa).

Residues 1 to 29 form the signal peptide; that stretch reads MPARPIPVPAFALALALAAALAVPAPAAA.

It belongs to the FlgI family. The basal body constitutes a major portion of the flagellar organelle and consists of four rings (L,P,S, and M) mounted on a central rod.

It is found in the periplasm. It localises to the bacterial flagellum basal body. Functionally, assembles around the rod to form the L-ring and probably protects the motor/basal body from shearing forces during rotation. This Anaeromyxobacter dehalogenans (strain 2CP-1 / ATCC BAA-258) protein is Flagellar P-ring protein.